The primary structure comprises 349 residues: Hydroxymethylglutaryl-CoA synthase (349 aa).

Positions 29 and 30 each coordinate (3S)-3-hydroxy-3-methylglutaryl-CoA. The active-site Proton donor/acceptor is Glu81. 2 residues coordinate (3S)-3-hydroxy-3-methylglutaryl-CoA: Cys113 and Thr154. The active-site Acyl-thioester intermediate is the Cys113. Arg202 is a binding site for CoA. Positions 204 and 237 each coordinate (3S)-3-hydroxy-3-methylglutaryl-CoA. His237 (proton donor/acceptor) is an active-site residue. Position 242 (Lys242) interacts with CoA. Residues Lys246, Asn269, and Ser299 each coordinate (3S)-3-hydroxy-3-methylglutaryl-CoA.

It belongs to the thiolase-like superfamily. Archaeal HMG-CoA synthase family. In terms of assembly, interacts with acetoacetyl-CoA thiolase that catalyzes the precedent step in the pathway and with a DUF35 protein. The acetoacetyl-CoA thiolase/HMG-CoA synthase complex channels the intermediate via a fused CoA-binding site, which allows for efficient coupling of the endergonic thiolase reaction with the exergonic HMGCS reaction.

It catalyses the reaction acetoacetyl-CoA + acetyl-CoA + H2O = (3S)-3-hydroxy-3-methylglutaryl-CoA + CoA + H(+). Its pathway is metabolic intermediate biosynthesis; (R)-mevalonate biosynthesis; (R)-mevalonate from acetyl-CoA: step 2/3. Catalyzes the condensation of acetyl-CoA with acetoacetyl-CoA to form 3-hydroxy-3-methylglutaryl-CoA (HMG-CoA). Functions in the mevalonate (MVA) pathway leading to isopentenyl diphosphate (IPP), a key precursor for the biosynthesis of isoprenoid compounds that are building blocks of archaeal membrane lipids. The sequence is that of Hydroxymethylglutaryl-CoA synthase from Methanosarcina mazei (strain ATCC BAA-159 / DSM 3647 / Goe1 / Go1 / JCM 11833 / OCM 88) (Methanosarcina frisia).